The chain runs to 700 residues: Dymeclin (700 aa).

Gly-2 is lipidated: N-myristoyl glycine. Ser-347 bears the Phosphoserine mark.

This sequence belongs to the dymeclin family.

This chain is Dymeclin, found in Drosophila pseudoobscura pseudoobscura (Fruit fly).